Consider the following 700-residue polypeptide: mRNA cap guanine-N(7) methyltransferase (700 aa).

2 stretches are compositionally biased toward basic and acidic residues: residues 1–10 and 52–67; these read MVYDPIRDCD and EPPR…ESHR. 2 disordered regions span residues 1–263 and 277–392; these read MVYD…SVLR and AHAN…ERNK. Over residues 113 to 128 the composition is skewed to polar residues; it reads RSPSMSLSPRSQNQSL. Composition is skewed to low complexity over residues 129–144 and 220–241; these read PYPS…SAHP and PQPT…TPHH. The region spanning 429-700 is the mRNA cap 0 methyltransferase domain; it reads SPIIGLKKFN…LYMGFAFEKM (272 aa). 438–439 provides a ligand contact to mRNA; the sequence is NN. S-adenosyl-L-methionine contacts are provided by K442, G461, D483, D512, Q538, and Y543.

It belongs to the class I-like SAM-binding methyltransferase superfamily. mRNA cap 0 methyltransferase family.

It is found in the nucleus. The catalysed reaction is a 5'-end (5'-triphosphoguanosine)-ribonucleoside in mRNA + S-adenosyl-L-methionine = a 5'-end (N(7)-methyl 5'-triphosphoguanosine)-ribonucleoside in mRNA + S-adenosyl-L-homocysteine. Functionally, responsible for methylating the 5'-cap structure of mRNAs. The chain is mRNA cap guanine-N(7) methyltransferase (ABD1) from Cryptococcus neoformans var. neoformans serotype D (strain B-3501A) (Filobasidiella neoformans).